The chain runs to 261 residues: Ribosomal RNA small subunit methyltransferase A (261 aa).

S-adenosyl-L-methionine-binding residues include histidine 13, leucine 15, glycine 40, glutamate 61, aspartate 85, and asparagine 105.

The protein belongs to the class I-like SAM-binding methyltransferase superfamily. rRNA adenine N(6)-methyltransferase family. RsmA subfamily.

The protein localises to the cytoplasm. It carries out the reaction adenosine(1518)/adenosine(1519) in 16S rRNA + 4 S-adenosyl-L-methionine = N(6)-dimethyladenosine(1518)/N(6)-dimethyladenosine(1519) in 16S rRNA + 4 S-adenosyl-L-homocysteine + 4 H(+). Functionally, specifically dimethylates two adjacent adenosines (A1518 and A1519) in the loop of a conserved hairpin near the 3'-end of 16S rRNA in the 30S particle. May play a critical role in biogenesis of 30S subunits. The polypeptide is Ribosomal RNA small subunit methyltransferase A (Flavobacterium johnsoniae (strain ATCC 17061 / DSM 2064 / JCM 8514 / BCRC 14874 / CCUG 350202 / NBRC 14942 / NCIMB 11054 / UW101) (Cytophaga johnsonae)).